The primary structure comprises 181 residues: Large ribosomal subunit protein uL10 (181 aa).

Belongs to the universal ribosomal protein uL10 family. Part of the ribosomal stalk of the 50S ribosomal subunit. The N-terminus interacts with L11 and the large rRNA to form the base of the stalk. The C-terminus forms an elongated spine to which L12 dimers bind in a sequential fashion forming a multimeric L10(L12)X complex.

Its function is as follows. Forms part of the ribosomal stalk, playing a central role in the interaction of the ribosome with GTP-bound translation factors. The protein is Large ribosomal subunit protein uL10 of Fervidobacterium nodosum (strain ATCC 35602 / DSM 5306 / Rt17-B1).